A 223-amino-acid polypeptide reads, in one-letter code: 7-cyano-7-deazaguanine synthase (223 aa).

An ATP-binding site is contributed by L8–L18. Zn(2+) contacts are provided by C187, C197, C200, and C203.

It belongs to the QueC family. Zn(2+) serves as cofactor.

It catalyses the reaction 7-carboxy-7-deazaguanine + NH4(+) + ATP = 7-cyano-7-deazaguanine + ADP + phosphate + H2O + H(+). It functions in the pathway purine metabolism; 7-cyano-7-deazaguanine biosynthesis. In terms of biological role, catalyzes the ATP-dependent conversion of 7-carboxy-7-deazaguanine (CDG) to 7-cyano-7-deazaguanine (preQ(0)). The protein is 7-cyano-7-deazaguanine synthase of Methylococcus capsulatus (strain ATCC 33009 / NCIMB 11132 / Bath).